A 397-amino-acid chain; its full sequence is Cephalotocin receptor 1 (397 aa).

Residues 1-48 (MRYITTHPNEISTQIWNNFSSTEIWSNFSAAKNETQPIRRNQDLANAE) lie on the Extracellular side of the membrane. 3 N-linked (GlcNAc...) asparagine glycosylation sites follow: Asn18, Asn27, and Asn33. The helical transmembrane segment at 49–69 (VITLAVVIIITVIGNSIVLIT) threads the bilayer. At 70–91 (LFQRRKKLTRMHLFILHLSVTD) the chain is on the cytoplasmic side. A helical transmembrane segment spans residues 92–112 (LFVAFFNNLPQMIWDITFLFL). The Extracellular portion of the chain corresponds to 113–120 (GTDLLCRL). Residues Cys118 and Cys194 are joined by a disulfide bond. A helical membrane pass occupies residues 121–141 (VTYLQSVAMYASSYVLVATAI). The Cytoplasmic portion of the chain corresponds to 142–162 (DRYFAICHPLSSHKWTTARVH). The helical transmembrane segment at 163–183 (VMVFIAWMLSFLFSTPQLFIW) threads the bilayer. At 184-205 (SMQFSNIGLTCQATFDPEWTLK) the chain is on the extracellular side. Residues 206–226 (FYITWLTVAIWILPTIALTLF) form a helical membrane-spanning segment. Residues 227–293 (YGMMCFAVWK…RGISRAKVRS (67 aa)) lie on the Cytoplasmic side of the membrane. The chain crosses the membrane as a helical span at residues 294–314 (VALTLSVVACCFICWSPFFVC). At 315-331 (QMWAAWDENAPYSGAIY) the chain is on the extracellular side. A helical membrane pass occupies residues 332–352 (TILLLLSSLNSCTNPWIYMIF). The Cytoplasmic segment spans residues 353 to 397 (SVFQHRAKTSRFVNDEETTSVTVLSSRNDIRLMSMKKKLEQTARN).

It belongs to the G-protein coupled receptor 1 family. Vasopressin/oxytocin receptor subfamily. As to expression, present in brain, buccal ganglion, gastric ganglion, olfactory lube, peduncle lobe, optical lobe, pancreas, the oviduct and the ovary.

It localises to the cell membrane. Acts as a receptor for cephalotocin. This Octopus vulgaris (Common octopus) protein is Cephalotocin receptor 1.